The sequence spans 170 residues: MTQKAIYPGTFDPFTNGHLDVLERALNIFQEVVVVIADNSQKQTLFSVEERLSMIREIIEDYPAVSVEVLHDGLLADYARQKGARAIVRGVRQVKDFEYEFQISLLNRHLYPEVTTVFLMPNVKYTYVASSIIKEVAMLGGDVSKFVHPSVLKSLHGKLDESKQHKPNNI.

Thr10 is a substrate binding site. ATP contacts are provided by residues 10-11 (TF) and His18. Lys42, Leu75, and Arg89 together coordinate substrate. Residues 90 to 92 (GVR), Glu100, and 125 to 131 (YTYVASS) contribute to the ATP site.

It belongs to the bacterial CoaD family. As to quaternary structure, homohexamer. Mg(2+) serves as cofactor.

It is found in the cytoplasm. The catalysed reaction is (R)-4'-phosphopantetheine + ATP + H(+) = 3'-dephospho-CoA + diphosphate. The protein operates within cofactor biosynthesis; coenzyme A biosynthesis; CoA from (R)-pantothenate: step 4/5. Reversibly transfers an adenylyl group from ATP to 4'-phosphopantetheine, yielding dephospho-CoA (dPCoA) and pyrophosphate. In Chlorobium limicola (strain DSM 245 / NBRC 103803 / 6330), this protein is Phosphopantetheine adenylyltransferase.